Reading from the N-terminus, the 136-residue chain is uncharacterized protein (136 aa).

The chain crosses the membrane as a helical span at residues 19 to 39; the sequence is LGFPLGTALLLIIIFSLSGIF. Disordered stretches follow at residues 54 to 87 and 112 to 136; these read SLAN…LSVP and KLTV…VPLY.

Its subcellular location is the membrane. This is an uncharacterized protein from Arabidopsis thaliana (Mouse-ear cress).